Reading from the N-terminus, the 74-residue chain is ATP synthase subunit 9, mitochondrial (74 aa).

The next 2 membrane-spanning stretches (helical) occupy residues 8–28 (IGAGAATIASAGAAVGIGNVF) and 45–72 (LFGYAILGFALTEAIALFALMMAFLILF).

Belongs to the ATPase C chain family. F-type ATPases have 2 components, CF(1) - the catalytic core - and CF(0) - the membrane proton channel. CF(1) has five subunits: alpha(3), beta(3), gamma(1), delta(1), epsilon(1). CF(0) has three main subunits: a, b and c.

Its subcellular location is the mitochondrion membrane. Functionally, this protein is one of the chains of the nonenzymatic membrane component (F0) of mitochondrial ATPase. This is ATP synthase subunit 9, mitochondrial (ATP9) from Pisum sativum (Garden pea).